A 546-amino-acid polypeptide reads, in one-letter code: (-)-5-epieremophilene synthase STPS3 (546 aa).

Mg(2+)-binding residues include D299, D303, D442, T446, and E450. Positions 299–303 (DDTYD) match the DDXXD motif motif.

This sequence belongs to the terpene synthase family. Tpsa subfamily. As to quaternary structure, monomer. The cofactor is Mg(2+). As to expression, highly expressed in flowers and at lower levels in leaves.

It carries out the reaction (2E,6E)-farnesyl diphosphate = (-)-5-epi-eremophilene + diphosphate. The protein operates within secondary metabolite biosynthesis; terpenoid biosynthesis. Sesquiterpene synthase that catalyzes the conversion of farnesyl diphosphate to (-)-5-epi-eremophilene. The polypeptide is (-)-5-epieremophilene synthase STPS3 (Salvia miltiorrhiza (Chinese sage)).